A 340-amino-acid chain; its full sequence is Phosphate carrier protein, mitochondrial (340 aa).

A mitochondrion-targeting transit peptide spans 1-27; sequence MSVFSQLAESSKQNPFSLPVRSGNCAS. Solcar repeat units follow at residues 41-125, 138-222, and 239-317; these read KYYA…FKNV, YRTS…TVEA, and EQLV…VKVA. 6 helical membrane passes run 47-67, 95-114, 141-161, 200-220, 241-261, and 297-317; these read ALGG…LDLV, RALV…QGLG, SLYL…LAPM, PLWM…EKTV, LVVT…VSHP, and IIMI…VKVA.

Belongs to the mitochondrial carrier (TC 2.A.29) family.

It localises to the mitochondrion inner membrane. Its function is as follows. Transport of phosphate groups from the cytosol to the mitochondrial matrix. This chain is Phosphate carrier protein, mitochondrial, found in Caenorhabditis elegans.